A 460-amino-acid polypeptide reads, in one-letter code: Argininosuccinate lyase (460 aa).

Belongs to the lyase 1 family. Argininosuccinate lyase subfamily.

It is found in the cytoplasm. The catalysed reaction is 2-(N(omega)-L-arginino)succinate = fumarate + L-arginine. The protein operates within amino-acid biosynthesis; L-arginine biosynthesis; L-arginine from L-ornithine and carbamoyl phosphate: step 3/3. The chain is Argininosuccinate lyase from Maridesulfovibrio salexigens (strain ATCC 14822 / DSM 2638 / NCIMB 8403 / VKM B-1763) (Desulfovibrio salexigens).